Here is a 92-residue protein sequence, read N- to C-terminus: Small ribosomal subunit protein bS20 (92 aa).

The protein belongs to the bacterial ribosomal protein bS20 family.

Binds directly to 16S ribosomal RNA. The protein is Small ribosomal subunit protein bS20 of Rickettsia conorii (strain ATCC VR-613 / Malish 7).